A 144-amino-acid chain; its full sequence is Probable subtilase-type protease inhibitor (144 aa).

The first 34 residues, 1-34 (MPNTARWAVTLTLTATAVCGPLAGASLATPNAAA), serve as a signal peptide directing secretion. 2 disulfide bridges follow: C66/C81 and C102/C132.

This sequence belongs to the protease inhibitor I16 (SSI) family. Homodimer.

The protein resides in the secreted. Functionally, strong inhibitor of bacterial serine proteases such as subtilisin. This is Probable subtilase-type protease inhibitor (sti1) from Streptomyces avermitilis (strain ATCC 31267 / DSM 46492 / JCM 5070 / NBRC 14893 / NCIMB 12804 / NRRL 8165 / MA-4680).